Consider the following 470-residue polypeptide: Alpha-galactosidase (470 aa).

Positions 1–18 (MFSLLLLTSTALVETALG) are cleaved as a signal peptide. A disulfide bond links cysteine 42 and cysteine 74. Residue asparagine 43 is glycosylated (N-linked (GlcNAc...) asparagine). Substrate is bound by residues aspartate 72 and aspartate 73. Asparagine 82 carries N-linked (GlcNAc...) asparagine glycosylation. The cysteines at positions 121 and 151 are disulfide-linked. Lysine 147 contributes to the substrate binding site. The Nucleophile role is filled by aspartate 149. Residue asparagine 175 is glycosylated (N-linked (GlcNAc...) asparagine). Arginine 205 contributes to the substrate binding site. Aspartate 209 acts as the Proton donor in catalysis. 2 disulfides stabilise this stretch: cysteine 221–cysteine 237 and cysteine 223–cysteine 230. Glutamine 251 contacts substrate. Residues asparagine 270, asparagine 388, asparagine 413, asparagine 422, asparagine 435, and asparagine 454 are each glycosylated (N-linked (GlcNAc...) asparagine).

Belongs to the glycosyl hydrolase 27 family. Homotetramer.

The protein localises to the secreted. It carries out the reaction Hydrolysis of terminal, non-reducing alpha-D-galactose residues in alpha-D-galactosides, including galactose oligosaccharides, galactomannans and galactolipids.. In Zygotorulaspora mrakii (Zygosaccharomyces mrakii), this protein is Alpha-galactosidase (MEL).